Reading from the N-terminus, the 846-residue chain is MPVKFHTKTLESVIDPVAQQVGQLVLFHEQAESGLLKEDLTPLVQGVGIAVTNLVQVAASMVETSNDEDFKAELPPSMQEVQQAAVFLSDAARLLKADQGSPEGKRKLLDGARGVINGMSDLLMCADRSEVRKMVKVCRSVQEYLDVAKVIDVEADLATFLQNLTPGMTSMMKVVEQRHPELTNLAHAQMLKSELGTVREQIPILISSIRVCCLVIVKDGSSGMKDAAFGRDYVIQKLFIAIEEIIRVLQLTTTFEEEEVGGAGAASAASLAHMFHQAQDALASGDISRSTLDAVRKCISEGRRVAALAATDETRAKLLAAADELDQILKELEELQAKGLGDSRQARALAHAAAVKLQELEQEIRKALAERVATDFVNVGGPIKALEDAALASPSDPNRQANFAQKAKEFEAHTARLADTAELVASSGGCSDAVAAELRKEAAKLRDISTAVVPAARVVLENPGNQAAKDYLRTVKEKWLEAAESMGRSVDGVIDSLEFMKVSEARIQADVKEAKRIALAEEDSMKLIAKASSVARQANRVIQVAKVEADNSENPEFVAKLSSASESLAKSISPMVIEAKAVVTSPQNKDIQRKFCSSADKVVEGVAAVRSVIEDNWVPPRPPLPELEEEEEPPELPPPPEDPASLLPAEMQEAEEMLRAPLPPKDQNPIHHAAASVFREADQWDEKGNDLISLVKQMARKMAMMSKYTRGESGEVRSKADLIRMAKEIALNAQELLKLARQIANACMDKRAKTNLLQLLDRIPTISTQLKILATVKATSMGGGDARADADATDMLVGNAENLMRTVKDVIRASEAACIRLRPDSPIASILWRKKGGQGRRISVSY.

Residues 1-257 (MPVKFHTKTL…VLQLTTTFEE (257 aa)) are interaction with TLN. Positions 315–370 (RAKLLAAADELDQILKELEELQAKGLGDSRQARALAHAAAVKLQELEQEIRKALAE) form a coiled coil. The interval 617-646 (WVPPRPPLPELEEEEEPPELPPPPEDPASL) is disordered.

It belongs to the vinculin/alpha-catenin family. In terms of assembly, monomer. Interacts with TLN (talin); the interaction facilitates VIN1 binding to F-actin. Expressed in epithelial tissues, specifically the pinacoderm (outer epithelium) and choanoderm (feeding epithelium) (at protein level). Also detected in migratory cells of the mesohyl (at protein level).

It localises to the cytoplasm. The protein localises to the cell cortex. It is found in the cell projection. The protein resides in the filopodium. Its subcellular location is the cytoskeleton. Functionally, actin filament (F-actin)-binding protein which may play a role in cell-cell adhesion. This is Vinculin from Oscarella pearsei (Sponge).